The following is a 261-amino-acid chain: 3-methyl-2-oxobutanoate hydroxymethyltransferase (261 aa).

Mg(2+) contacts are provided by aspartate 42 and aspartate 81. 3-methyl-2-oxobutanoate contacts are provided by residues 42–43, aspartate 81, and lysine 110; that span reads DS. Glutamate 112 contributes to the Mg(2+) binding site. Residue glutamate 179 is the Proton acceptor of the active site.

Belongs to the PanB family. Homodecamer; pentamer of dimers. Mg(2+) serves as cofactor.

It localises to the cytoplasm. It carries out the reaction 3-methyl-2-oxobutanoate + (6R)-5,10-methylene-5,6,7,8-tetrahydrofolate + H2O = 2-dehydropantoate + (6S)-5,6,7,8-tetrahydrofolate. The protein operates within cofactor biosynthesis; (R)-pantothenate biosynthesis; (R)-pantoate from 3-methyl-2-oxobutanoate: step 1/2. In terms of biological role, catalyzes the reversible reaction in which hydroxymethyl group from 5,10-methylenetetrahydrofolate is transferred onto alpha-ketoisovalerate to form ketopantoate. The chain is 3-methyl-2-oxobutanoate hydroxymethyltransferase from Thermus thermophilus (strain ATCC 27634 / DSM 579 / HB8).